A 118-amino-acid polypeptide reads, in one-letter code: Large ribosomal subunit protein bL19 (118 aa).

The protein belongs to the bacterial ribosomal protein bL19 family.

This protein is located at the 30S-50S ribosomal subunit interface and may play a role in the structure and function of the aminoacyl-tRNA binding site. The chain is Large ribosomal subunit protein bL19 from Levilactobacillus brevis (strain ATCC 367 / BCRC 12310 / CIP 105137 / JCM 1170 / LMG 11437 / NCIMB 947 / NCTC 947) (Lactobacillus brevis).